The primary structure comprises 192 residues: uncharacterized protein (192 aa).

Transmembrane regions (helical) follow at residues 5–22 (VPPLFFVCALFFAEGIGL), 42–61 (FLFLGGILITGNWVCIHYVY), 66–88 (LRFLTPLGVGASAFCLSTCSGKL), 101–118 (WGLLYALVFYITYTALNL), 122–139 (LVMWGVSCVGFLCFSTIL), and 159–181 (ALLLASMGFIALSLYGTDELWLF).

The protein resides in the cell membrane. This is an uncharacterized protein from Treponema pallidum (strain Nichols).